The sequence spans 158 residues: SsrA-binding protein (158 aa).

The protein belongs to the SmpB family.

It localises to the cytoplasm. Required for rescue of stalled ribosomes mediated by trans-translation. Binds to transfer-messenger RNA (tmRNA), required for stable association of tmRNA with ribosomes. tmRNA and SmpB together mimic tRNA shape, replacing the anticodon stem-loop with SmpB. tmRNA is encoded by the ssrA gene; the 2 termini fold to resemble tRNA(Ala) and it encodes a 'tag peptide', a short internal open reading frame. During trans-translation Ala-aminoacylated tmRNA acts like a tRNA, entering the A-site of stalled ribosomes, displacing the stalled mRNA. The ribosome then switches to translate the ORF on the tmRNA; the nascent peptide is terminated with the 'tag peptide' encoded by the tmRNA and targeted for degradation. The ribosome is freed to recommence translation, which seems to be the essential function of trans-translation. The sequence is that of SsrA-binding protein from Parafrankia sp. (strain EAN1pec).